The sequence spans 294 residues: Ribosomal protein L11 methyltransferase (294 aa).

Positions 147, 169, 191, and 231 each coordinate S-adenosyl-L-methionine.

Belongs to the methyltransferase superfamily. PrmA family.

It is found in the cytoplasm. The enzyme catalyses L-lysyl-[protein] + 3 S-adenosyl-L-methionine = N(6),N(6),N(6)-trimethyl-L-lysyl-[protein] + 3 S-adenosyl-L-homocysteine + 3 H(+). Functionally, methylates ribosomal protein L11. This is Ribosomal protein L11 methyltransferase from Dichelobacter nodosus (strain VCS1703A).